We begin with the raw amino-acid sequence, 800 residues long: Chondroitin sulfate synthase 1 (800 aa).

At 1-7 (MAARGRR) the chain is on the cytoplasmic side. Residues 8–28 (AWLSMLLGLVLGFVLASRLVL) traverse the membrane as a helical; Signal-anchor for type II membrane protein segment. At 29-800 (PRASELKRVG…GGSHGSARTA (772 aa)) the chain is on the lumenal side. Positions 36–66 (RVGPRRRPSPEGCRPGQEASQPGGARGDARG) are disordered. N-linked (GlcNAc...) asparagine glycosylation is found at asparagine 188 and asparagine 622. Positions 632 and 746 each coordinate a divalent metal cation.

This sequence belongs to the chondroitin N-acetylgalactosaminyltransferase family. Requires Co(2+) as cofactor. The cofactor is Mn(2+). Cd(2+) is required as a cofactor.

It localises to the golgi apparatus. The protein localises to the golgi stack membrane. It is found in the secreted. The catalysed reaction is 3-O-(beta-D-GlcA-(1-&gt;3)-beta-D-GalNAc-(1-&gt;4)-beta-D-GlcA-(1-&gt;3)-beta-D-Gal-(1-&gt;3)-beta-D-Gal-(1-&gt;4)-beta-D-Xyl)-L-seryl-[protein] + UDP-N-acetyl-alpha-D-galactosamine = 3-O-(beta-D-GalNAc-(1-&gt;4)-beta-D-GlcA-(1-&gt;3)-beta-D-GalNAc-(1-&gt;4)-beta-D-GlcA-(1-&gt;3)-beta-D-Gal-(1-&gt;3)-beta-D-Gal-(1-&gt;4)-beta-D-Xyl)-L-seryl-[protein] + UDP + H(+). It carries out the reaction 3-O-{beta-D-GlcA-(1-&gt;3)-[beta-D-GalNAc-(1-&gt;4)-beta-D-GlcA-(1-&gt;3)](n)-beta-D-GalNAc-(1-&gt;4)-beta-D-GlcA-(1-&gt;3)-beta-D-Gal-(1-&gt;3)-beta-D-Gal-(1-&gt;4)-beta-D-Xyl}-L-seryl-[protein] + UDP-N-acetyl-alpha-D-galactosamine = 3-O-{[beta-D-GalNAc-(1-&gt;4)-beta-D-GlcA-(1-&gt;3)](n+1)-beta-D-GalNAc-(1-&gt;4)-beta-D-GlcA-(1-&gt;3)-beta-D-Gal-(1-&gt;3)-beta-D-Gal-(1-&gt;4)-beta-D-Xyl}-L-seryl-[protein] + UDP + H(+). It catalyses the reaction 3-O-(beta-D-GalNAc-(1-&gt;4)-beta-D-GlcA-(1-&gt;3)-beta-D-Gal-(1-&gt;3)-beta-D-Gal-(1-&gt;4)-beta-D-Xyl)-L-seryl-[protein] + UDP-alpha-D-glucuronate = 3-O-(beta-D-GlcA-(1-&gt;3)-beta-D-GalNAc-(1-&gt;4)-beta-D-GlcA-(1-&gt;3)-beta-D-Gal-(1-&gt;3)-beta-D-Gal-(1-&gt;4)-beta-D-Xyl)-L-seryl-[protein] + UDP + H(+). The enzyme catalyses 3-O-{[beta-D-GalNAc-(1-&gt;4)-beta-D-GlcA-(1-&gt;3)](n)-beta-D-GalNAc-(1-&gt;4)-beta-D-GlcA-(1-&gt;3)-beta-D-Gal-(1-&gt;3)-beta-D-Gal-(1-&gt;4)-beta-D-Xyl}-L-seryl-[protein] + UDP-alpha-D-glucuronate = 3-O-{beta-D-GlcA-(1-&gt;3)-[beta-D-GalNAc-(1-&gt;4)-beta-D-GlcA-(1-&gt;3)](n)-beta-D-GalNAc-(1-&gt;4)-beta-D-GlcA-(1-&gt;3)-beta-D-Gal-(1-&gt;3)-beta-D-Gal-(1-&gt;4)-beta-D-Xyl}-L-seryl-[protein] + UDP + H(+). Has both beta-1,3-glucuronic acid and beta-1,4-N-acetylgalactosamine transferase activity. Transfers glucuronic acid (GlcUA) from UDP-GlcUA and N-acetylgalactosamine (GalNAc) from UDP-GalNAc to the non-reducing end of the elongating chondroitin polymer. Involved in the negative control of osteogenesis likely through the modulation of NOTCH signaling. This Mus musculus (Mouse) protein is Chondroitin sulfate synthase 1 (Chsy1).